The sequence spans 745 residues: uncharacterized protein (745 aa).

In terms of domain architecture, HTH araC/xylS-type spans 158 to 256 (NQVCDYIELH…HQTPKQYRGD (99 aa)). DNA-binding regions (H-T-H motif) lie at residues 175 to 196 (SELSEYVGWSESHLSKKFAESL) and 223 to 246 (ITDIALQNGFSSAASFARTFKHFT).

This is an uncharacterized protein from Staphylococcus aureus (strain MRSA252).